Consider the following 75-residue polypeptide: Conotoxin Vc6a (75 aa).

Residues 1-22 form the signal peptide; it reads MKLTCVVIVAVLFLTANTFATA. The propeptide occupies 23–49; the sequence is DDPRNGLENLFLKAHHEMNPEASKLNE. Disulfide bonds link Cys-51-Cys-66, Cys-58-Cys-69, and Cys-65-Cys-74.

Expressed by the venom duct.

It localises to the secreted. This is Conotoxin Vc6a from Conus victoriae (Queen Victoria cone).